The following is a 40-amino-acid chain: Ice-structuring protein GS-8 (40 aa).

Blocked amino end (Met) is present on Met1.

Belongs to the type-I AFP family.

In terms of biological role, antifreeze proteins lower the blood freezing point. The chain is Ice-structuring protein GS-8 from Myoxocephalus aenaeus (Grubby sculpin).